The following is a 78-amino-acid chain: Acyl carrier protein (78 aa).

Positions 1-76 (MALFEDIQAV…DVVKYIEDNK (76 aa)) constitute a Carrier domain. Serine 36 bears the O-(pantetheine 4'-phosphoryl)serine mark.

Belongs to the acyl carrier protein (ACP) family. In terms of processing, 4'-phosphopantetheine is transferred from CoA to a specific serine of apo-ACP by AcpS. This modification is essential for activity because fatty acids are bound in thioester linkage to the sulfhydryl of the prosthetic group.

The protein localises to the cytoplasm. It functions in the pathway lipid metabolism; fatty acid biosynthesis. In terms of biological role, carrier of the growing fatty acid chain in fatty acid biosynthesis. The protein is Acyl carrier protein of Helicobacter pylori (strain Shi470).